The following is an 874-amino-acid chain: Cellulose synthase catalytic subunit [UDP-forming] (874 aa).

The next 4 helical transmembrane spans lie at 30–50 (SPFS…VFPL), 151–171 (ILGV…TQPF), 173–193 (PLSQ…VRRM), and 230–250 (LVCG…LVLG). A catalytic subdomain A region spans residues 271-364 (QWPTVDIFVP…FVAIFDCDHV (94 aa)). Asp313 is a catalytic residue. Substrate contacts are provided by Asp360 and Asp362. A catalytic subdomain B region spans residues 441–501 (KPLDEIGGIA…GQRIRWARGM (61 aa)). Asp457 is a catalytic residue. A run of 5 helical transmembrane segments spans residues 525 to 545 (LNAM…TAPL), 547 to 567 (FLLL…LFVI), 592 to 612 (IYET…LINP), 634 to 654 (VISR…AAGV), and 668 to 688 (VIVS…AVAV). A PilZ domain is found at 694–790 (QVRRAHRVEI…QHIDFVQCTF (97 aa)). A helical transmembrane segment spans residues 833–853 (SVKVIFRSLTALIAWIVSFIP).

This sequence belongs to the glycosyltransferase 2 family. The cofactor is Mg(2+).

It is found in the cell inner membrane. It carries out the reaction [(1-&gt;4)-beta-D-glucosyl](n) + UDP-alpha-D-glucose = [(1-&gt;4)-beta-D-glucosyl](n+1) + UDP + H(+). It functions in the pathway glycan metabolism; bacterial cellulose biosynthesis. Its activity is regulated as follows. Activated by bis-(3'-5') cyclic diguanylic acid (c-di-GMP). In terms of biological role, catalytic subunit of cellulose synthase. It polymerizes uridine 5'-diphosphate glucose to cellulose, which is produced as an extracellular component for mechanical and chemical protection at the onset of the stationary phase, when the cells exhibit multicellular behavior (rdar morphotype). Coexpression of cellulose and thin aggregative fimbriae leads to a hydrophobic network with tightly packed cells embedded in a highly inert matrix. This chain is Cellulose synthase catalytic subunit [UDP-forming] (bcsA), found in Salmonella typhi.